A 272-amino-acid chain; its full sequence is Undecaprenyl-diphosphatase (272 aa).

7 helical membrane passes run phenylalanine 2–isoleucine 22, phenylalanine 43–tyrosine 63, tryptophan 82–leucine 102, leucine 110–leucine 130, tyrosine 185–isoleucine 205, valine 224–leucine 244, and phenylalanine 252–isoleucine 272.

This sequence belongs to the UppP family.

The protein localises to the cell membrane. It carries out the reaction di-trans,octa-cis-undecaprenyl diphosphate + H2O = di-trans,octa-cis-undecaprenyl phosphate + phosphate + H(+). Functionally, catalyzes the dephosphorylation of undecaprenyl diphosphate (UPP). Confers resistance to bacitracin. The chain is Undecaprenyl-diphosphatase from Lacticaseibacillus casei (strain BL23) (Lactobacillus casei).